Reading from the N-terminus, the 1151-residue chain is Zinc finger protein ZFPM2 (1151 aa).

Positions 1–13 are enriched in basic residues; that stretch reads MSRRKQSKPRQIK. A disordered region spans residues 1 to 102; it reads MSRRKQSKPR…ETDDWDGPGE (102 aa). Composition is skewed to acidic residues over residues 18–33 and 70–82; these read DAIE…EETD and EGIQ…DGDT. The CCHC FOG-type 1 zinc finger occupies 244–277; the sequence is IVNKDIFPCKSCGIWYRSERNLQAHLMYYCSGRQ. C252, C255, H268, and C273 together coordinate Zn(2+). Residues 296-320 form a C2H2-type 1 zinc finger; it reads SLCPFPQCTKSFSNARALEMHLNSH. Residue K324 forms a Glycyl lysine isopeptide (Lys-Gly) (interchain with G-Cter in SUMO1) linkage. 2 C2H2-type zinc fingers span residues 335-357 and 363-385; these read LKCT…LFSH and FRCN…QELH. A disordered region spans residues 389–487; it reads GKLPRESDME…RLASSPVQPN (99 aa). Composition is skewed to polar residues over residues 401–410 and 419–431; these read PSATEDSLQP and ELPQ…QTKD. Residue K444 forms a Glycyl lysine isopeptide (Lys-Gly) (interchain with G-Cter in SUMO2) linkage. Over residues 447 to 485 the composition is skewed to polar residues; the sequence is LFLTNQRPEIQPTTNKQSFSYTKIKSEPSSPRLASSPVQ. K471 participates in a covalent cross-link: Glycyl lysine isopeptide (Lys-Gly) (interchain with G-Cter in SUMO1). S532 carries the phosphoserine modification. Residues 542-575 form a CCHC FOG-type 2 zinc finger; the sequence is PLMPKGATCFECNITFNNLDNYLVHKKHYCSSRW. Residues C550, C553, H566, and C571 each coordinate Zn(2+). A Phosphoserine modification is found at S581. The segment at 636–683 is disordered; it reads GPNGKGHDKDFSTQTKKLSTSSNNDDKINGKPVDVKNPSVPLVDGESD. Over residues 647 to 658 the composition is skewed to polar residues; that stretch reads STQTKKLSTSSN. Residues 681 to 714 form a CCHC FOG-type 3 zinc finger; sequence ESDPNKTTCEACNITFSRHETYMVHKQYYCATRH. Zn(2+) is bound by residues C689, C692, H705, and C710. A Nuclear localization signal motif is present at residues 736 to 740; it reads RKRRK. Residues 829-835 form an interaction with CTBP2 region; it reads PIDLSKK. The CCHC FOG-type 4 zinc-finger motif lies at 848 to 881; that stretch reads KRLLDYHECTVCKISFNKVENYLAHKQNFCPVTA. The Zn(2+) site is built by C856, C859, H872, and C877. S904 carries the phosphoserine modification. Residues K915 and K955 each participate in a glycyl lysine isopeptide (Lys-Gly) (interchain with G-Cter in SUMO1) cross-link. A Phosphoserine modification is found at S1014. A disordered region spans residues 1051–1095; it reads DERPAANPQQENISQNPQHEDDHKSPSWISENPLAANENVSPGIP. A compositionally biased stretch (polar residues) spans 1057-1067; the sequence is NPQQENISQNP. The segment at 1113–1146 adopts a CCHC FOG-type 5 zinc-finger fold; the sequence is QAPTSGKYCRLCDIQFNNLSNFITHKKFYCSSHA. 4 residues coordinate Zn(2+): C1121, C1124, H1137, and C1142.

Belongs to the FOG (Friend of GATA) family. In terms of assembly, interacts with the N-terminal zinc-finger of GATA4, GATA5 and probably GATA6. Interacts with retinoid nuclear receptor RXRA when ligand bound. Interacts with corepressor CTBP2; this interaction is however not essential for corepressor activity. Able to bind GATA1 in vitro. Interacts with NR2F2 and NR2F6. Interacts with ATOH8; mediates indirect interaction with GATA4. In terms of processing, sumoylation reduces transcriptional repression activity. Widely expressed at low level.

It is found in the nucleus. Functionally, transcription regulator that plays a central role in heart morphogenesis and development of coronary vessels from epicardium, by regulating genes that are essential during cardiogenesis. Essential cofactor that acts via the formation of a heterodimer with transcription factors of the GATA family GATA4, GATA5 and GATA6. Such heterodimer can both activate or repress transcriptional activity, depending on the cell and promoter context. Also required in gonadal differentiation, possibly be regulating expression of SRY. Probably acts a corepressor of NR2F2. This chain is Zinc finger protein ZFPM2 (ZFPM2), found in Homo sapiens (Human).